Consider the following 76-residue polypeptide: uncharacterized protein (76 aa).

This is an uncharacterized protein from Sulfolobus islandicus filamentous virus (isolate Iceland/Hveragerdi) (SIFV).